We begin with the raw amino-acid sequence, 1474 residues long: Adhesion G protein-coupled receptor L1 (1474 aa).

Residues 1–24 (MARLAAVLWNLCVTAVLVTSATQG) form the signal peptide. The Extracellular portion of the chain corresponds to 25–858 (LSRAGLPFGL…EIYQGRINEL (834 aa)). One can recognise an SUEL-type lectin domain in the interval 40–129 (ACEGYPIELR…KYLEVQYDCV (90 aa)). 5 cysteine pairs are disulfide-bonded: Cys41–Cys71, Cys50–Cys128, Cys83–Cys115, Cys96–Cys102, and Cys140–Cys322. Glu42 provides a ligand contact to alpha-L-rhamnose. Residue Asn98 is glycosylated (N-linked (GlcNAc...) asparagine). 117 to 120 (GTYK) is a binding site for alpha-L-rhamnose. Residues 139-398 (VCPGTLQKVL…VVRYSLEFGP (260 aa)) form the Olfactomedin-like domain. The disordered stretch occupies residues 400–434 (DPSAGPATSPPLSTTTTARPTPLTSTASPAATTPL). The span at 405–434 (PATSPPLSTTTTARPTPLTSTASPAATTPL) shows a compositional bias: low complexity. 2 disulfide bridges follow: Cys480/Cys515 and Cys503/Cys532. 6 N-linked (GlcNAc...) asparagine glycosylation sites follow: Asn531, Asn640, Asn742, Asn801, Asn806, and Asn827. The 183-residue stretch at 669-851 (PARFLAAKEN…AVLMAHREIY (183 aa)) folds into the GAIN-B domain. 2 disulfides stabilise this stretch: Cys802-Cys833 and Cys821-Cys835. The segment at 802-851 (CSFWNYSERSMLGYWSTQGCRLVESNKTHTTCACSHLTNFAVLMAHREIY) is GPS. Residues 859–879 (LLSVITWVGIVISLVCLAICI) traverse the membrane as a helical segment. Residues 880 to 893 (STFCFLRGLQTDRN) are Cytoplasmic-facing. A helical membrane pass occupies residues 894 to 914 (TIHKNLCINLFLAELLFLVGI). The Extracellular segment spans residues 915–920 (DKTQYE). The chain crosses the membrane as a helical span at residues 921-941 (IACPIFAGLLHYFFLAAFSWL). The Cytoplasmic portion of the chain corresponds to 942-964 (CLEGVHLYLLLVEVFESEYSRTK). The chain crosses the membrane as a helical span at residues 965 to 985 (YYYLGGYCFPALVVGIAAAID). At 986-1002 (YRSYGTEKACWLRVDNY) the chain is on the extracellular side. A helical transmembrane segment spans residues 1003 to 1023 (FIWSFIGPVSFVIVVNLVFLM). Residues 1024–1050 (VTLHKMIRSSSVLKPDSSRLDNIKSWA) lie on the Cytoplasmic side of the membrane. Residues 1051–1071 (LGAIALLFLLGLTWAFGLLFI) form a helical membrane-spanning segment. Residues 1072-1075 (NKES) are Extracellular-facing. Residues 1076–1096 (VVMAYLFTTFNAFQGVFIFVF) traverse the membrane as a helical segment. The Cytoplasmic segment spans residues 1097-1474 (HCALQKKVHK…DGQMQLVTSL (378 aa)). Omega-N-methylarginine is present on Arg1194. Ser1220 carries the phosphoserine modification. Disordered stretches follow at residues 1248 to 1273 (FNNSYSLRSGDFPPGDGGPEPPRGRN), 1294 to 1328 (RGSSSAAKGPPPPEPPVPPVPGGGGEEEAGGPGGA), 1360 to 1429 (ESES…SRPP), and 1451 to 1474 (YLAAPGLEGPGPDGDGQMQLVTSL). 2 stretches are compositionally biased toward pro residues: residues 1302-1314 (GPPPPEPPVPPVP) and 1408-1420 (ALPPPPPAPPGPP). A Phosphoserine modification is found at Ser1473.

Belongs to the G-protein coupled receptor 2 family. Adhesion G-protein coupled receptor (ADGR) subfamily. As to quaternary structure, forms a heterodimer, consisting of a large extracellular region (p120) non-covalently linked to a seven-transmembrane moiety (p85). Interacts with syntaxin and with proteins of the SHANK family via the PDZ domain. Interacts (via extracellular domain) with FLRT1, FLRT2 and FLRT3 (via extracellular domain). Autoproteolytically cleaved into 2 subunits, an extracellular subunit and a seven-transmembrane subunit. This proteolytic processing takes place early in the biosynthetic pathway, either in the endoplasmic reticulum or in the early compartment of the Golgi apparatus.

It is found in the cell membrane. It localises to the cell projection. The protein localises to the axon. The protein resides in the growth cone. Its subcellular location is the synapse. It is found in the presynaptic cell membrane. It localises to the synaptosome. In terms of biological role, calcium-independent receptor of high affinity for alpha-latrotoxin, an excitatory neurotoxin present in black widow spider venom which triggers massive exocytosis from neurons and neuroendocrine cells. Receptor for TENM2 that mediates heterophilic synaptic cell-cell contact and postsynaptic specialization. Receptor probably implicated in the regulation of exocytosis. The polypeptide is Adhesion G protein-coupled receptor L1 (Homo sapiens (Human)).